Reading from the N-terminus, the 346-residue chain is UPF0283 membrane protein VP1870 (346 aa).

The segment at 1–30 (MSELKQKQIFSEKALEKEQQSDSPELTAQK) is disordered. Residues 21–30 (SDSPELTAQK) are compositionally biased toward polar residues. 2 helical membrane-spanning segments follow: residues 73–93 (VFATFAGLVGWQAVDSVVTAV) and 98–118 (WLALGWVGFITAVASLGLGAI).

Belongs to the UPF0283 family.

It localises to the cell inner membrane. The sequence is that of UPF0283 membrane protein VP1870 from Vibrio parahaemolyticus serotype O3:K6 (strain RIMD 2210633).